The chain runs to 370 residues: 3-isopropylmalate dehydrogenase (370 aa).

77 to 90 (GPKWDSVPYEVRPE) provides a ligand contact to NAD(+). The substrate site is built by R97, R107, R135, and D226. Residues D226, D250, and D254 each coordinate Mg(2+). 290–302 (GSAPDIAGKGIAN) contributes to the NAD(+) binding site.

Belongs to the isocitrate and isopropylmalate dehydrogenases family. LeuB type 1 subfamily. In terms of assembly, homodimer. It depends on Mg(2+) as a cofactor. The cofactor is Mn(2+).

It localises to the cytoplasm. It catalyses the reaction (2R,3S)-3-isopropylmalate + NAD(+) = 4-methyl-2-oxopentanoate + CO2 + NADH. It participates in amino-acid biosynthesis; L-leucine biosynthesis; L-leucine from 3-methyl-2-oxobutanoate: step 3/4. In terms of biological role, catalyzes the oxidation of 3-carboxy-2-hydroxy-4-methylpentanoate (3-isopropylmalate) to 3-carboxy-4-methyl-2-oxopentanoate. The product decarboxylates to 4-methyl-2 oxopentanoate. The polypeptide is 3-isopropylmalate dehydrogenase (Brucella melitensis biotype 1 (strain ATCC 23456 / CCUG 17765 / NCTC 10094 / 16M)).